A 311-amino-acid polypeptide reads, in one-letter code: Alpha/beta hydrolase domain-containing protein 17C (311 aa).

Positions 48 to 67 (EAPASTAQQPPREEGSGEPA) are disordered. Catalysis depends on charge relay system residues S193, D258, and H287.

The protein belongs to the AB hydrolase superfamily. ABHD17 family. Palmitoylated on cysteine residues located in a cysteine cluster at the N-terminus which promotes membrane localization.

Its subcellular location is the recycling endosome membrane. The protein localises to the cell projection. It is found in the dendritic spine. The protein resides in the postsynaptic density membrane. The enzyme catalyses S-hexadecanoyl-L-cysteinyl-[protein] + H2O = L-cysteinyl-[protein] + hexadecanoate + H(+). Hydrolyzes fatty acids from S-acylated cysteine residues in proteins. Has depalmitoylating activity towards NRAS. This Xenopus laevis (African clawed frog) protein is Alpha/beta hydrolase domain-containing protein 17C.